Here is a 609-residue protein sequence, read N- to C-terminus: Indole-3-acetic acid-amido synthetase GH3.17 (609 aa).

The protein belongs to the IAA-amido conjugating enzyme family.

In terms of biological role, catalyzes the synthesis of indole-3-acetic acid (IAA)-amino acid conjugates, providing a mechanism for the plant to cope with the presence of excess auxin. Strongly reactive with Glu, Gln, Trp, Asp, Ala, Leu, Phe, Gly, Tyr, Met, Ile and Val. Appears to favor Glu over Asp while the other GH3 favor Asp over Glu. Little or no product formation with His, Ser, Thr, Arg, Lys, or Cys. Also active on pyruvic and butyric acid analogs of IAA, PAA and the synthetic auxin naphthaleneacetic acid (NAA). The two chlorinated synthetic auxin herbicides 2,4-D and 3,6-dichloro-o-anisic acid (dicamba) cannot be used as substrates. The sequence is that of Indole-3-acetic acid-amido synthetase GH3.17 (GH3.17) from Arabidopsis thaliana (Mouse-ear cress).